A 203-amino-acid chain; its full sequence is Hydra actinoporin-like toxin 2 (203 aa).

An N-terminal signal peptide occupies residues 1 to 21 (MLSYLCFGCFLVSASLEIACG). Positions 175 to 177 (RGG) match the Cell attachment site motif.

This sequence belongs to the actinoporin family. HALT subfamily. In terms of assembly, octamer or nonamer in membranes. Monomer in the soluble state. In vitro, interacts with folate receptor alpha (of target organism). Strongly expressed in the gland and mucous cells in the endoderm.

It is found in the nematocyst. It localises to the secreted. The protein resides in the target cell membrane. Pore-forming protein that forms hydrophilic pores and causes cytolysis. Compared to equinatoxin-2 (AC P61914), it reveals lower cytolysis activity (5-12-fold difference, tested on erythrocytes), a larger pore size (probably 2-3 nm) and different affinity to membrane lipids (100-fold lower affinity to sphingomyelin). Binds to sulfatides (SFT). Shows cytolytic activity on HeLa cells, with a different potency than its paralogs (from most potent to less potent: HALT-4&gt;HALT-6~HALT-1&gt;HALT-3&gt;HALT-7&gt;HALT-2). Pore formation is a multi-step process that involves specific recognition of membrane lipid by a protein aromatic residues rich region, firm binding to the membrane (mainly driven by hydrophobic interactions) accompanied by the transfer of the N-terminal region to the lipid-water interface and finally pore formation after oligomerization of monomers. In vitro, binds to the folate receptor alpha (FOLR1), a GPI-anchored membrane protein that plays a major role in the uptake of folate/folic acid into cells via endocytosis, suggesting a possible involvement of this receptor in the mechanism of HALT-1-induced cell lysis. In vivo, does not cause visible paralysis in larvae of the blowfly Sarcophaga faculata, the most common arthropod prey of Hydra. In Hydra vulgaris (Hydra), this protein is Hydra actinoporin-like toxin 2.